The chain runs to 126 residues: Histone H2B (126 aa).

A compositionally biased stretch (low complexity) spans 1 to 12; that stretch reads MPEPAKSAPAAK. The interval 1 to 35 is disordered; sequence MPEPAKSAPAAKKGSKKAVSKVQKKDGKKRRKSRK. N6-acetyllysine occurs at positions 6 and 13. Ser15 is modified (phosphoserine). Lys16 and Lys21 each carry N6-acetyllysine. The O-linked (GlcNAc) serine glycan is linked to Ser113. Residue Lys121 forms a Glycyl lysine isopeptide (Lys-Gly) (interchain with G-Cter in ubiquitin) linkage.

This sequence belongs to the histone H2B family. In terms of assembly, the nucleosome is a histone octamer containing two molecules each of H2A, H2B, H3 and H4 assembled in one H3-H4 heterotetramer and two H2A-H2B heterodimers. The octamer wraps approximately 147 bp of DNA. In terms of processing, monoubiquitination of Lys-121 by BRE1 gives a specific tag for epigenetic transcriptional activation and is also prerequisite for histone H3 'Lys-4' and 'Lys-79' methylation. Post-translationally, phosphorylated on Ser-15 during apoptosis; which facilitates apoptotic chromatin condensation. GlcNAcylation at Ser-113 promotes monoubiquitination of Lys-121. It fluctuates in response to extracellular glucose, and associates with transcribed genes. Expressed by the skin granular glands.

Its subcellular location is the nucleus. It localises to the secreted. It is found in the chromosome. In terms of biological role, core component of nucleosome. Nucleosomes wrap and compact DNA into chromatin, limiting DNA accessibility to the cellular machineries which require DNA as a template. Histones thereby play a central role in transcription regulation, DNA repair, DNA replication and chromosomal stability. DNA accessibility is regulated via a complex set of post-translational modifications of histones, also called histone code, and nucleosome remodeling. Functionally, has antibacterial activity against the Gram-negative bacteria E.coli and the Gram-positive bacteria S.aureus. In Zhangixalus schlegelii (Japanese gliding frog), this protein is Histone H2B.